A 459-amino-acid polypeptide reads, in one-letter code: MESSNLGGGGGGGGGGGPPPFLIKTYEMVEDAATNHVVSWGPGGASFVVWNPLDFSRDLLPKYFKHNNFSSFIRQLNTYGFRKIDPERWEFANEDFIRGHTHLLKNIHRRKPVHSHSLQNQINGPLAESERRELEEEINRLKYEKSILVADLQRQNQQQYVINWQMQAMEGRLVAMEQRQKNIVASLCEMLQRRGGAVSSSLLESDHFSKKRRVPKMDLFVDDCAAGEEQKVFQFQGIGTDAPAMPPVLPVTNGEAFDRVELSLVSLEKLFQRANDACTAAEEMYSHGHGGTEPSTAICPEEMNTAPMETGIDLQLPASLHPSSPNTGNAHLHLSTELTESPGFVQSPELPMAEIREDIHVTRYPTQADVNSEIASSTDTSQDGTSETEASHGPTNDVFWERFLTETPRSCLDESERQESPKDDVKAELGCNGFHHREKVDQITEQMGHLASAEQTLHT.

Residues 127-189 are a coiled coil; the sequence is AESERRELEE…QKNIVASLCE (63 aa). Residues 141 to 191 form a hydrophobic repeat HR-A/B region; it reads LKYEKSILVADLQRQNQQQYVINWQMQAMEGRLVAMEQRQKNIVASLCEML. Residues 209-213 carry the Nuclear localization signal motif; sequence SKKRR. A compositionally biased stretch (polar residues) spans 364 to 388; it reads YPTQADVNSEIASSTDTSQDGTSET. Residues 364–398 form a disordered region; it reads YPTQADVNSEIASSTDTSQDGTSETEASHGPTNDV. Residues 397–406 carry the AHA motif; the sequence is DVFWERFLTE.

The protein belongs to the HSF family. Class A subfamily. As to quaternary structure, homotrimer. Exhibits temperature-dependent phosphorylation.

The protein resides in the nucleus. Transcriptional regulator that specifically binds DNA of heat shock promoter elements (HSE). The sequence is that of Heat stress transcription factor A-4d (HSFA4D) from Oryza sativa subsp. japonica (Rice).